Reading from the N-terminus, the 150-residue chain is Large ribosomal subunit protein uL15 (150 aa).

The interval 1–60 (MKLSDLRPNPGANKRRKRVGRGPGSGHGKTATRGHKGQKSRSGGLKDPRRFEGGRSTTLM) is disordered. The span at 30 to 39 (TATRGHKGQK) shows a compositional bias: basic residues. Basic and acidic residues predominate over residues 44–53 (GLKDPRRFEG).

It belongs to the universal ribosomal protein uL15 family. As to quaternary structure, part of the 50S ribosomal subunit.

Functionally, binds to the 23S rRNA. The polypeptide is Large ribosomal subunit protein uL15 (Thermus thermophilus (strain ATCC BAA-163 / DSM 7039 / HB27)).